A 311-amino-acid chain; its full sequence is Urease accessory protein UreD (311 aa).

This sequence belongs to the UreD family. In terms of assembly, ureD, UreF and UreG form a complex that acts as a GTP-hydrolysis-dependent molecular chaperone, activating the urease apoprotein by helping to assemble the nickel containing metallocenter of UreC. The UreE protein probably delivers the nickel.

Its subcellular location is the cytoplasm. Required for maturation of urease via the functional incorporation of the urease nickel metallocenter. This is Urease accessory protein UreD from Synechococcus sp. (strain CC9902).